A 463-amino-acid chain; its full sequence is Cysteine--tRNA ligase (463 aa).

Zn(2+) is bound at residue Cys28. Residues 30–40 (VTIYDLCHIGH) carry the 'HIGH' region motif. Residues Cys209, His234, and Glu238 each coordinate Zn(2+). Positions 266–270 (KMSKS) match the 'KMSKS' region motif. Lys269 contributes to the ATP binding site.

It belongs to the class-I aminoacyl-tRNA synthetase family. Monomer. It depends on Zn(2+) as a cofactor.

Its subcellular location is the cytoplasm. The enzyme catalyses tRNA(Cys) + L-cysteine + ATP = L-cysteinyl-tRNA(Cys) + AMP + diphosphate. The sequence is that of Cysteine--tRNA ligase from Tolumonas auensis (strain DSM 9187 / NBRC 110442 / TA 4).